Consider the following 267-residue polypeptide: MSDILQKILAVKADEVAAARKRRDLPSLRAEAESLRSEAGLAPRGFERALRDKIAAGHAAVIAEIKKASPSKGVLREQFLPEAIAESYATHGAACLSVLTDEHFFQGHADYLKRARGACPLPALRKDFMVDLYQVYEARTWGADCILLIVAALDHGLMAELEACALELGMDVLVEVHGDDELEAALRLKTPLLGVNNRNLRTFEVSLDNTLDLLPHIPADKLVVTESGILAPADVKRMRDANVHAFLVGEAFMRAKEPGVELARLFG.

The protein belongs to the TrpC family.

It carries out the reaction 1-(2-carboxyphenylamino)-1-deoxy-D-ribulose 5-phosphate + H(+) = (1S,2R)-1-C-(indol-3-yl)glycerol 3-phosphate + CO2 + H2O. It participates in amino-acid biosynthesis; L-tryptophan biosynthesis; L-tryptophan from chorismate: step 4/5. The polypeptide is Indole-3-glycerol phosphate synthase (Cupriavidus taiwanensis (strain DSM 17343 / BCRC 17206 / CCUG 44338 / CIP 107171 / LMG 19424 / R1) (Ralstonia taiwanensis (strain LMG 19424))).